A 500-amino-acid chain; its full sequence is Carnosic acid synthase (500 aa).

The chain crosses the membrane as a helical span at residues 4-24; the sequence is LILLSLAFLASCVVAYSRRRP. Cysteine 443 contacts heme.

The protein belongs to the cytochrome P450 family. Heme is required as a cofactor. As to expression, expressed in leaf glandular trichomes.

It localises to the membrane. It catalyses the reaction 11-hydroxyferruginol + 3 reduced [NADPH--hemoprotein reductase] + 3 O2 = carnosate + 3 oxidized [NADPH--hemoprotein reductase] + 4 H2O + 4 H(+). It carries out the reaction miltiradiene + 2 reduced [NADPH--hemoprotein reductase] + 2 O2 = miltiradien-20-al + 2 oxidized [NADPH--hemoprotein reductase] + 3 H2O + 2 H(+). The catalysed reaction is ferruginol + 3 reduced [NADPH--hemoprotein reductase] + 3 O2 = pisiferate + 3 oxidized [NADPH--hemoprotein reductase] + 4 H2O + 4 H(+). Its pathway is secondary metabolite biosynthesis; terpenoid biosynthesis. Its function is as follows. Monooxygenase involved in the biosynthesis of carnosate, a potent antioxidant labdane-related diterpene natural product. Catalyzes the oxidation of 11-hydroxyferruginol to produce carnosate. Mediates the conversion of miltiradien into miltiradien-20-al. Also involved in the production of pisiferic acid and derivative products from ferruginol. The protein is Carnosic acid synthase of Salvia pomifera (Apple sage).